The following is a 426-amino-acid chain: Glutamate-1-semialdehyde 2,1-aminomutase (426 aa).

K263 is modified (N6-(pyridoxal phosphate)lysine).

This sequence belongs to the class-III pyridoxal-phosphate-dependent aminotransferase family. HemL subfamily. As to quaternary structure, homodimer. Pyridoxal 5'-phosphate serves as cofactor.

The protein localises to the cytoplasm. The catalysed reaction is (S)-4-amino-5-oxopentanoate = 5-aminolevulinate. Its pathway is porphyrin-containing compound metabolism; protoporphyrin-IX biosynthesis; 5-aminolevulinate from L-glutamyl-tRNA(Glu): step 2/2. This Caldicellulosiruptor bescii (strain ATCC BAA-1888 / DSM 6725 / KCTC 15123 / Z-1320) (Anaerocellum thermophilum) protein is Glutamate-1-semialdehyde 2,1-aminomutase.